The following is a 170-amino-acid chain: Large ribosomal subunit protein uL10 (170 aa).

It belongs to the universal ribosomal protein uL10 family. Part of the ribosomal stalk of the 50S ribosomal subunit. The N-terminus interacts with L11 and the large rRNA to form the base of the stalk. The C-terminus forms an elongated spine to which L12 dimers bind in a sequential fashion forming a multimeric L10(L12)X complex.

Forms part of the ribosomal stalk, playing a central role in the interaction of the ribosome with GTP-bound translation factors. The sequence is that of Large ribosomal subunit protein uL10 from Novosphingobium aromaticivorans (strain ATCC 700278 / DSM 12444 / CCUG 56034 / CIP 105152 / NBRC 16084 / F199).